A 179-amino-acid chain; its full sequence is ATP synthase subunit b (179 aa).

The chain crosses the membrane as a helical span at residues 27-47 (TAITFLVMLAVLAKFAWGPIV).

The protein belongs to the ATPase B chain family. In terms of assembly, F-type ATPases have 2 components, F(1) - the catalytic core - and F(0) - the membrane proton channel. F(1) has five subunits: alpha(3), beta(3), gamma(1), delta(1), epsilon(1). F(0) has three main subunits: a(1), b(2) and c(10-14). The alpha and beta chains form an alternating ring which encloses part of the gamma chain. F(1) is attached to F(0) by a central stalk formed by the gamma and epsilon chains, while a peripheral stalk is formed by the delta and b chains.

The protein resides in the cell inner membrane. F(1)F(0) ATP synthase produces ATP from ADP in the presence of a proton or sodium gradient. F-type ATPases consist of two structural domains, F(1) containing the extramembraneous catalytic core and F(0) containing the membrane proton channel, linked together by a central stalk and a peripheral stalk. During catalysis, ATP synthesis in the catalytic domain of F(1) is coupled via a rotary mechanism of the central stalk subunits to proton translocation. In terms of biological role, component of the F(0) channel, it forms part of the peripheral stalk, linking F(1) to F(0). This Anaeromyxobacter dehalogenans (strain 2CP-C) protein is ATP synthase subunit b.